The following is a 624-amino-acid chain: Chaperone protein HtpG (624 aa).

The interval 1-336 (MKGQETRGFQ…SNDLPLNVSR (336 aa)) is a; substrate-binding. The interval 337–552 (EILQDSTVTR…ADEMSTQMAK (216 aa)) is b. Residues 553–624 (LFAAAGQSVP…IRRMNQLLVS (72 aa)) form a c region.

The protein belongs to the heat shock protein 90 family. Homodimer.

It is found in the cytoplasm. Functionally, molecular chaperone. Has ATPase activity. The polypeptide is Chaperone protein HtpG (Salmonella choleraesuis (strain SC-B67)).